We begin with the raw amino-acid sequence, 638 residues long: MPDIKLPDGSIRSYEQAVTVAEVAASIGAGLARAALAGKIGGQLVDTSYLIEQNADLAIITERDAEGLELIRHSTAHLLAYAVKELFPEAQVTIGPVIENGFYYDFAYKRPFTPEDLVAIEKRMAELAKKDIPVSREVWARDDAVKFFLDLGEKYKAELIGAIPADQQVSLYREGDFIDLCRGPHVPTTAKLKVFKLMKVAGAYWRGDHRNEQLQRIYGTAWAKKEDLDAYLHMLEEAEKRDHRRLGKQYDLFHMQDEAPGLVFWHPKGWAIWQEIEGYMRAVYRNNGYQEVRCPQILDKSLWEKSGHWEHYKDNMFTTSSENRDYAVKPMNCPGHVQVFNAGLRSYRELPLRYGEFGSCHRNEPAGALHGLMRVRGFVQDDGHIFCTEDQIESEVTAFNALVKKVYADFGFNDVAVKLALRPDSRVGADDVWDRAEDALRQGLRASGLEWTELPGEGAFYGPKIEFHIRDAIGRSWQCGTMQVDFSMPGRLGAEYVGADDTRKVPVMLHRAILGSLERFIGILIENFAGALPLWLAPVQVVVLNISEKQADYAAEVAQKLHSAGFRAEADLRNEKITYKIREHSLNRLPYQLVVGDKEKADGLVAVRTRGGQDLGQMPVDVLIKRLQEEVVARSGTA.

Positions 1-61 (MPDIKLPDGS…EQNADLAIIT (61 aa)) constitute a TGS domain. The catalytic stretch occupies residues 242–533 (DHRRLGKQYD…LIENFAGALP (292 aa)). Zn(2+) contacts are provided by C333, H384, and H510.

It belongs to the class-II aminoacyl-tRNA synthetase family. As to quaternary structure, homodimer. Zn(2+) serves as cofactor.

Its subcellular location is the cytoplasm. It carries out the reaction tRNA(Thr) + L-threonine + ATP = L-threonyl-tRNA(Thr) + AMP + diphosphate + H(+). Catalyzes the attachment of threonine to tRNA(Thr) in a two-step reaction: L-threonine is first activated by ATP to form Thr-AMP and then transferred to the acceptor end of tRNA(Thr). Also edits incorrectly charged L-seryl-tRNA(Thr). This Dechloromonas aromatica (strain RCB) protein is Threonine--tRNA ligase.